We begin with the raw amino-acid sequence, 347 residues long: Protein RecA (347 aa).

65–72 (GPESSGKT) provides a ligand contact to ATP. The span at 327–336 (KFEPTELSRE) shows a compositional bias: basic and acidic residues. A disordered region spans residues 327–347 (KFEPTELSREEGDEDTLEDAM). Residues 337 to 347 (EGDEDTLEDAM) are compositionally biased toward acidic residues.

The protein belongs to the RecA family.

It is found in the cytoplasm. In terms of biological role, can catalyze the hydrolysis of ATP in the presence of single-stranded DNA, the ATP-dependent uptake of single-stranded DNA by duplex DNA, and the ATP-dependent hybridization of homologous single-stranded DNAs. It interacts with LexA causing its activation and leading to its autocatalytic cleavage. This is Protein RecA from Xylella fastidiosa (strain M23).